Consider the following 426-residue polypeptide: Phosphomethylpyrimidine synthase (426 aa).

Substrate is bound by residues asparagine 65, methionine 94, tyrosine 123, histidine 162, 184–186, 225–228, and glutamate 264; these read SRG and DGMR. Histidine 268 provides a ligand contact to Zn(2+). Tyrosine 291 serves as a coordination point for substrate. Histidine 332 contributes to the Zn(2+) binding site. [4Fe-4S] cluster contacts are provided by cysteine 408, cysteine 411, and cysteine 415.

It belongs to the ThiC family. [4Fe-4S] cluster serves as cofactor.

It catalyses the reaction 5-amino-1-(5-phospho-beta-D-ribosyl)imidazole + S-adenosyl-L-methionine = 4-amino-2-methyl-5-(phosphooxymethyl)pyrimidine + CO + 5'-deoxyadenosine + formate + L-methionine + 3 H(+). The protein operates within cofactor biosynthesis; thiamine diphosphate biosynthesis. Its function is as follows. Catalyzes the synthesis of the hydroxymethylpyrimidine phosphate (HMP-P) moiety of thiamine from aminoimidazole ribotide (AIR) in a radical S-adenosyl-L-methionine (SAM)-dependent reaction. The chain is Phosphomethylpyrimidine synthase from Methanococcus maripaludis (strain DSM 14266 / JCM 13030 / NBRC 101832 / S2 / LL).